We begin with the raw amino-acid sequence, 75 residues long: UPF0352 protein YejL (75 aa).

The protein belongs to the UPF0352 family.

The chain is UPF0352 protein YejL from Shigella flexneri.